Here is a 716-residue protein sequence, read N- to C-terminus: 1,4-alpha-glucan branching enzyme GlgB (716 aa).

The Nucleophile role is filled by aspartate 399. Catalysis depends on glutamate 452, which acts as the Proton donor.

Belongs to the glycosyl hydrolase 13 family. GlgB subfamily. In terms of assembly, monomer.

It carries out the reaction Transfers a segment of a (1-&gt;4)-alpha-D-glucan chain to a primary hydroxy group in a similar glucan chain.. It functions in the pathway glycan biosynthesis; glycogen biosynthesis. Functionally, catalyzes the formation of the alpha-1,6-glucosidic linkages in glycogen by scission of a 1,4-alpha-linked oligosaccharide from growing alpha-1,4-glucan chains and the subsequent attachment of the oligosaccharide to the alpha-1,6 position. This Rhodopseudomonas palustris (strain ATCC BAA-98 / CGA009) protein is 1,4-alpha-glucan branching enzyme GlgB.